An 874-amino-acid chain; its full sequence is MKAAEIREKFLKFFESKGHTIVRSSSLVPGNDPTLMFTNSGMVQFKDVFLGTDRRPYTRATTAQRSVRAGGKHNDLENVGYTARHHTFFEMLGNFSFGDYFKHDAIRFAWELLTTVYMLPKDKLWVTVYQEDDEAYDIWAKEVGVPTERIIRIGDNKGARYASDNFWTMGDTGPCGPCTEIFYDHGPEVWGGPPGSPEEDGDRYIEIWNLVFMQFNRDAQGNMTRLPKPCVDTGMGLERLAAVLQHVHSNYEIDLFQNLIKAAARVTEVSDLNNNSLKVIADHIRACAFLIVDGVIPGNEGRGYVLRRIVRRAIRHGYKLGRKGAFFHKLVADLVAEMGAAYPELKEAEQRVTDVLRQEEERFFETIEHGMSILESALADLEAKGGKVLDGELAFKLHDTYGFPLDLTADVCRERGVTVDEPAFDDAMARQREQARAAGKFKAAQGLEYTGAKTTFHGYEEIAFDDAKVVALYVDGSAVTEVKAGQDAVVVLDHTPFYAESGGQVGDQGVLANASTRFAVADTLKVQADVIGHHGTLEQGTLKVGDVLRAEIDAQRRARTQRNHSATHLMHKALREVLGSHVQQKGSLVDADKTRFDFAHNAPLTDDEIRRVEQIVNDEILANAPGIVRVMPYDEAVKGGAMALFGEKYGDEVRVLDLGFSRELCGGTHVSRTGDIGLFKIVMEGGVAAGIRRVEAITGDNAVRYVQELDARVNEAAAALKAQPAELTQRIAQVQDQVKSLEKELAALKSKLASSQGDELAQQAVEVGGVHVLAATLDGADAKTLRETVDKLKDKLKSAAIVLAAVEGGKVSLIAGVTAEASKKVKAGELVNFVAQQVGGKGGGRPDMAQAGGTEPANLPAALAGVKGWVEARL.

The Zn(2+) site is built by His564, His568, Cys665, and His669.

It belongs to the class-II aminoacyl-tRNA synthetase family. The cofactor is Zn(2+).

Its subcellular location is the cytoplasm. It carries out the reaction tRNA(Ala) + L-alanine + ATP = L-alanyl-tRNA(Ala) + AMP + diphosphate. Functionally, catalyzes the attachment of alanine to tRNA(Ala) in a two-step reaction: alanine is first activated by ATP to form Ala-AMP and then transferred to the acceptor end of tRNA(Ala). Also edits incorrectly charged Ser-tRNA(Ala) and Gly-tRNA(Ala) via its editing domain. The sequence is that of Alanine--tRNA ligase from Burkholderia multivorans (strain ATCC 17616 / 249).